A 231-amino-acid chain; its full sequence is Protein OPG061 (231 aa).

Belongs to the orthopoxvirus OPG058 family.

It is found in the host nucleus. The protein resides in the host nucleolus. The polypeptide is Protein OPG061 (OPG061) (Variola virus).